The chain runs to 83 residues: MSFLSFLLGQKKSSASVAKERLQIILAHERGRGDSPDYLPQLQQELVAVISKYVKIDPEDIKVHLERQDTLEVLEVKIEMPQN.

It belongs to the MinE family.

Functionally, prevents the cell division inhibition by proteins MinC and MinD at internal division sites while permitting inhibition at polar sites. This ensures cell division at the proper site by restricting the formation of a division septum at the midpoint of the long axis of the cell. This Bordetella parapertussis (strain 12822 / ATCC BAA-587 / NCTC 13253) protein is Cell division topological specificity factor.